The primary structure comprises 404 residues: S-adenosylmethionine synthase (404 aa).

H18 is an ATP binding site. Residue D20 coordinates Mg(2+). Residue E46 coordinates K(+). L-methionine is bound by residues E59 and Q102. The tract at residues 102 to 112 is flexible loop; sequence QSPDIAQGVDT. ATP is bound by residues 177 to 179, 249 to 250, D258, 264 to 265, A281, and K285; these read DGK, KF, and RK. D258 contributes to the L-methionine binding site. K289 contributes to the L-methionine binding site.

This sequence belongs to the AdoMet synthase family. In terms of assembly, homotetramer; dimer of dimers. Requires Mg(2+) as cofactor. The cofactor is K(+).

Its subcellular location is the cytoplasm. It carries out the reaction L-methionine + ATP + H2O = S-adenosyl-L-methionine + phosphate + diphosphate. It functions in the pathway amino-acid biosynthesis; S-adenosyl-L-methionine biosynthesis; S-adenosyl-L-methionine from L-methionine: step 1/1. Functionally, catalyzes the formation of S-adenosylmethionine (AdoMet) from methionine and ATP. The overall synthetic reaction is composed of two sequential steps, AdoMet formation and the subsequent tripolyphosphate hydrolysis which occurs prior to release of AdoMet from the enzyme. The protein is S-adenosylmethionine synthase of Nocardia farcinica (strain IFM 10152).